A 1154-amino-acid chain; its full sequence is Voltage-gated inwardly rectifying potassium channel KCNH2 (1154 aa).

Residues 1–403 (MPVRRGHVAP…RIHRWTILHY (403 aa)) are Cytoplasmic-facing. One can recognise a PAS domain in the interval 41-70 (VIYCNDGFCELCGYSRAEVMQRPCTCDFLH). Residues 92–144 (RKVEIAFYRKDGSCFLCLVDVVPVKNEDGAVIMFILNFEVVMEKDMVGSPARD) form the PAC domain. The disordered stretch occupies residues 233–312 (ALVGSGSPPA…ASTGAMHPLR (80 aa)). Ser239 is modified (phosphoserine). Residues 258–269 (PDGSGSSCSLAR) are compositionally biased toward polar residues. Phosphoserine occurs at positions 283, 284, 320, and 351. Residues 404 to 424 (SPFKAVWDWLILLLVIYTAVF) traverse the membrane as a helical segment. The Extracellular portion of the chain corresponds to 425-450 (TPYSAAFLLKETEEGSQAPDCGYACQ). A helical membrane pass occupies residues 451-471 (PLAVVDLIVDIMFIVDILINF). Residues 472-495 (RTTYVNANEEVVSHPGRIAVHYFK) lie on the Cytoplasmic side of the membrane. The chain crosses the membrane as a helical span at residues 496 to 516 (GWFLIDMVAAIPFDLLIFGSG). At 517–520 (SEEL) the chain is on the extracellular side. Residues 521-541 (IGLLKTARLLRLVRVARKLDR) form a helical; Voltage-sensor membrane-spanning segment. Residues 542 to 547 (YSEYGA) lie on the Cytoplasmic side of the membrane. The chain crosses the membrane as a helical span at residues 548–568 (AVLFLLMCTFALIAHWLACIW). Over 569–611 (YAIGNMEQPNMDSHIGWLHNLGDQIGKPYNSSGLGGPSIKDKY) the chain is Extracellular. Positions 612-632 (VTALYFTFSSLTSVGFGNVSP) form an intramembrane region, pore-forming. The Selectivity filter motif lies at 624–629 (SVGFGN). Residues 633–638 (NTNSEK) lie on the Extracellular side of the membrane. The chain crosses the membrane as a helical span at residues 639–659 (IFSICVMLIGSLMYASIFGNV). At 660–1154 (SAIIQRLYSG…LHRHGSDPGS (495 aa)) the chain is on the cytoplasmic side. Residues 742-842 (PFRGATKGCL…IHRDDLLEVL (101 aa)) are cNMP-binding domain. The disordered stretch occupies residues 870 to 985 (GSPGSTELEG…DVEKSSDTCN (116 aa)). Ser871 and Ser874 each carry phosphoserine. Residues 883–892 (RQRKRKLSFR) show a composition bias toward basic residues. Residues 916–927 (GPSGRGQQGGPW) show a composition bias toward gly residues. Low complexity predominate over residues 928-939 (GESLSSGPSSPE). Arg1014 carries the post-translational modification Omega-N-methylarginine. A coiled-coil region spans residues 1037–1064 (RGDVESRLDALQRQLNRLETRLSADMAT). The tract at residues 1125–1154 (DGPARRLSLPGQLGALTSQPLHRHGSDPGS) is disordered. Ser1132 carries the phosphoserine modification.

It belongs to the potassium channel family. H (Eag) (TC 1.A.1.20) subfamily. Kv11.1/KCNH2 sub-subfamily. The potassium channel is probably composed of a homo- or heterotetrameric complex of pore-forming alpha subunits that can associate with modulating beta subunits. Interacts with DNAJB12 and DNAJB14; chaperones DNAJB12 and DNAJB14 promote tetramerization. Heteromultimer with KCNH6/ERG2 and KCNH7/ERG3. Interacts with ALG10B. Forms a stable complex with KCNE1 or KCNE2, and that this heteromultimerization regulates Inward rectifier potassium channel activity. Interacts with CANX. The core-glycosylated, but not the fully glycosylated form interacts with RNF207. Interacts with NDFIP1 and NDFIP2; this interaction decreases the cell membrane expression by targeting KCNH2, through interaction with NEDD4L, for the degradation through the multivesicular bodies (MVBs)-lysosomal pathway. In terms of processing, phosphorylated on serine and threonine residues. Phosphorylation by PKA inhibits ion conduction.

It localises to the cell membrane. It catalyses the reaction K(+)(in) = K(+)(out). Functionally, pore-forming (alpha) subunit of voltage-gated inwardly rectifying potassium channel. Characterized by unusual gating kinetics by producing relatively small outward currents during membrane depolarization and large inward currents during subsequent repolarization which reflect a rapid inactivation during depolarization and quick recovery from inactivation but slow deactivation (closing) during repolarization. Channel properties are modulated by cAMP and subunit assembly. Forms a stable complex with KCNE1 or KCNE2, and that this heteromultimerization regulates inward rectifier potassium channel activity. This is Voltage-gated inwardly rectifying potassium channel KCNH2 from Sus scrofa (Pig).